Here is a 108-residue protein sequence, read N- to C-terminus: Nucleoid-associated protein Mmwyl1_2533 (108 aa).

The interval 1 to 22 (MFKGGMGNMMRQAQQMQENMQK) is disordered. A compositionally biased stretch (polar residues) spans 11–22 (RQAQQMQENMQK).

It belongs to the YbaB/EbfC family. As to quaternary structure, homodimer.

The protein localises to the cytoplasm. It localises to the nucleoid. In terms of biological role, binds to DNA and alters its conformation. May be involved in regulation of gene expression, nucleoid organization and DNA protection. In Marinomonas sp. (strain MWYL1), this protein is Nucleoid-associated protein Mmwyl1_2533.